We begin with the raw amino-acid sequence, 276 residues long: NH(3)-dependent NAD(+) synthetase (276 aa).

ATP is bound at residue G43–S50. D49 contributes to the Mg(2+) binding site. Deamido-NAD(+) is bound at residue R146. T166 contributes to the ATP binding site. E171 is a Mg(2+) binding site. Deamido-NAD(+)-binding residues include K179 and D186. ATP-binding residues include K195 and T217. A deamido-NAD(+)-binding site is contributed by H266–K267.

Belongs to the NAD synthetase family. As to quaternary structure, homodimer.

The catalysed reaction is deamido-NAD(+) + NH4(+) + ATP = AMP + diphosphate + NAD(+) + H(+). It functions in the pathway cofactor biosynthesis; NAD(+) biosynthesis; NAD(+) from deamido-NAD(+) (ammonia route): step 1/1. Its function is as follows. Catalyzes the ATP-dependent amidation of deamido-NAD to form NAD. Uses ammonia as a nitrogen source. This chain is NH(3)-dependent NAD(+) synthetase, found in Vibrio vulnificus (strain YJ016).